The chain runs to 411 residues: Multidrug resistance protein MdtG (411 aa).

11 helical membrane passes run 17 to 37 (LFVA…VMPF), 59 to 79 (LVFS…GGLA), 92 to 112 (ALGM…WQFL), 116 to 136 (AVLG…ATQV), 147 to 167 (WLST…GLLA), 174 to 194 (PVFF…LFAV), 222 to 242 (VLTL…IAPI), 257 to 277 (LAFV…ISAP), 291 to 311 (ILVA…MVQN), 320 to 340 (FLLG…LIYN), and 379 to 399 (AVFV…WITL).

Belongs to the major facilitator superfamily. DHA1 family. MdtG (TC 2.A.1.2.20) subfamily.

Its subcellular location is the cell inner membrane. This is Multidrug resistance protein MdtG from Erwinia billingiae (strain Eb661).